Reading from the N-terminus, the 366-residue chain is Tetraacyldisaccharide 4'-kinase (366 aa).

Residue 62–69 (RVGGTGKT) participates in ATP binding.

It belongs to the LpxK family.

The catalysed reaction is a lipid A disaccharide + ATP = a lipid IVA + ADP + H(+). It functions in the pathway glycolipid biosynthesis; lipid IV(A) biosynthesis; lipid IV(A) from (3R)-3-hydroxytetradecanoyl-[acyl-carrier-protein] and UDP-N-acetyl-alpha-D-glucosamine: step 6/6. In terms of biological role, transfers the gamma-phosphate of ATP to the 4'-position of a tetraacyldisaccharide 1-phosphate intermediate (termed DS-1-P) to form tetraacyldisaccharide 1,4'-bis-phosphate (lipid IVA). The sequence is that of Tetraacyldisaccharide 4'-kinase from Polynucleobacter necessarius subsp. necessarius (strain STIR1).